Reading from the N-terminus, the 230-residue chain is Cytidylate kinase (230 aa).

Residue 10 to 18 (GPAGSGKST) coordinates ATP.

The protein belongs to the cytidylate kinase family. Type 1 subfamily.

It is found in the cytoplasm. It catalyses the reaction CMP + ATP = CDP + ADP. The enzyme catalyses dCMP + ATP = dCDP + ADP. This chain is Cytidylate kinase, found in Leptospira borgpetersenii serovar Hardjo-bovis (strain JB197).